A 156-amino-acid chain; its full sequence is MLRQFIVSTVGRRLQLPMMAQSRLASNLDKTEYTTPGEIVDYDDPPHLPVPEYPVRPDEPLEIRKQRLLYQSRKRGMLENDLLLSTFVAKHLKDFNAEQTAEYDQLINGVSNDWDIFYWATDTKPTPPQFDTEIMRLLKEHVKNHEKVQRIRQPDL.

Residues 1 to 24 (MLRQFIVSTVGRRLQLPMMAQSRL) constitute a mitochondrion transit peptide.

It belongs to the SDHAF2 family. In terms of assembly, interacts with the flavoprotein subunit within the SDH catalytic dimer.

The protein localises to the mitochondrion matrix. Functionally, plays an essential role in the assembly of succinate dehydrogenase (SDH), an enzyme complex (also referred to as respiratory complex II) that is a component of both the tricarboxylic acid (TCA) cycle and the mitochondrial electron transport chain, and which couples the oxidation of succinate to fumarate with the reduction of ubiquinone (coenzyme Q) to ubiquinol. Required for flavinylation (covalent attachment of FAD) of the flavoprotein subunit of the SDH catalytic dimer. The chain is Succinate dehydrogenase assembly factor 2-B, mitochondrial from Drosophila simulans (Fruit fly).